We begin with the raw amino-acid sequence, 146 residues long: uncharacterized protein (146 aa).

One can recognise an N-acetyltransferase domain in the interval 7 to 146 (LQINYKTDEL…EGHDILIWNP (140 aa)).

This is an uncharacterized protein from Staphylococcus epidermidis (strain ATCC 35984 / DSM 28319 / BCRC 17069 / CCUG 31568 / BM 3577 / RP62A).